The primary structure comprises 92 residues: UPF0473 protein BC_4380 (92 aa).

This sequence belongs to the UPF0473 family.

The polypeptide is UPF0473 protein BC_4380 (Bacillus cereus (strain ATCC 14579 / DSM 31 / CCUG 7414 / JCM 2152 / NBRC 15305 / NCIMB 9373 / NCTC 2599 / NRRL B-3711)).